The chain runs to 407 residues: GTPase Obg (407 aa).

The 159-residue stretch at 1–159 folds into the Obg domain; it reads MKFVDEVSIR…RDLKLELKVL (159 aa). The disordered stretch occupies residues 127–149; the sequence is NTRFKSSTNRAPRQTTPGKPGDQ. Residues 129-143 show a composition bias toward polar residues; sequence RFKSSTNRAPRQTTP. Residues 160-333 form the OBG-type G domain; the sequence is ADVGLLGLPN…LTRDIMRYLE (174 aa). Residues 166-173, 191-195, 213-216, 283-286, and 314-316 contribute to the GTP site; these read GLPNAGKS, FTTLV, DIPG, NKCD, and SAI. Mg(2+)-binding residues include Ser-173 and Thr-193. A disordered region spans residues 376 to 407; sequence SGVKSVHDIGDDDWDEEDVDDEDGPEIIYVRD. Over residues 385 to 400 the composition is skewed to acidic residues; that stretch reads GDDDWDEEDVDDEDGP.

Belongs to the TRAFAC class OBG-HflX-like GTPase superfamily. OBG GTPase family. As to quaternary structure, monomer. The cofactor is Mg(2+).

It localises to the cytoplasm. Its function is as follows. An essential GTPase which binds GTP, GDP and possibly (p)ppGpp with moderate affinity, with high nucleotide exchange rates and a fairly low GTP hydrolysis rate. Plays a role in control of the cell cycle, stress response, ribosome biogenesis and in those bacteria that undergo differentiation, in morphogenesis control. This Pseudomonas savastanoi pv. phaseolicola (strain 1448A / Race 6) (Pseudomonas syringae pv. phaseolicola (strain 1448A / Race 6)) protein is GTPase Obg.